Reading from the N-terminus, the 366-residue chain is Holliday junction branch migration complex subunit RuvB (366 aa).

The interval methionine 1–isoleucine 49 is disordered. A large ATPase domain (RuvB-L) region spans residues proline 13 to tyrosine 210. Residues isoleucine 49, arginine 50, glycine 91, lysine 94, threonine 95, threonine 96, glutamate 157–tyrosine 159, arginine 200, tyrosine 210, and arginine 247 each bind ATP. Residue threonine 95 participates in Mg(2+) binding. The interval glutamate 211–glutamine 281 is small ATPAse domain (RuvB-S). A head domain (RuvB-H) region spans residues proline 284–leucine 366. Positions 339 and 344 each coordinate DNA.

Belongs to the RuvB family. As to quaternary structure, homohexamer. Forms an RuvA(8)-RuvB(12)-Holliday junction (HJ) complex. HJ DNA is sandwiched between 2 RuvA tetramers; dsDNA enters through RuvA and exits via RuvB. An RuvB hexamer assembles on each DNA strand where it exits the tetramer. Each RuvB hexamer is contacted by two RuvA subunits (via domain III) on 2 adjacent RuvB subunits; this complex drives branch migration. In the full resolvosome a probable DNA-RuvA(4)-RuvB(12)-RuvC(2) complex forms which resolves the HJ.

It localises to the cytoplasm. It carries out the reaction ATP + H2O = ADP + phosphate + H(+). In terms of biological role, the RuvA-RuvB-RuvC complex processes Holliday junction (HJ) DNA during genetic recombination and DNA repair, while the RuvA-RuvB complex plays an important role in the rescue of blocked DNA replication forks via replication fork reversal (RFR). RuvA specifically binds to HJ cruciform DNA, conferring on it an open structure. The RuvB hexamer acts as an ATP-dependent pump, pulling dsDNA into and through the RuvAB complex. RuvB forms 2 homohexamers on either side of HJ DNA bound by 1 or 2 RuvA tetramers; 4 subunits per hexamer contact DNA at a time. Coordinated motions by a converter formed by DNA-disengaged RuvB subunits stimulates ATP hydrolysis and nucleotide exchange. Immobilization of the converter enables RuvB to convert the ATP-contained energy into a lever motion, pulling 2 nucleotides of DNA out of the RuvA tetramer per ATP hydrolyzed, thus driving DNA branch migration. The RuvB motors rotate together with the DNA substrate, which together with the progressing nucleotide cycle form the mechanistic basis for DNA recombination by continuous HJ branch migration. Branch migration allows RuvC to scan DNA until it finds its consensus sequence, where it cleaves and resolves cruciform DNA. In Nostoc sp. (strain PCC 7120 / SAG 25.82 / UTEX 2576), this protein is Holliday junction branch migration complex subunit RuvB.